Consider the following 87-residue polypeptide: Lantipeptide prochlorosin 3.3 (87 aa).

Positions 1 to 64 (MSEEQLKAFI…DEELEAASGG (64 aa)) are excised as a propeptide. 2,3-didehydrobutyrine is present on threonine 67. The segment at residues 75–85 (TAGCYGGTKMC) is a cross-link (beta-methyllanthionine (Thr-Cys)). Positions 78–82 (CYGGT) form a cross-link, beta-methyllanthionine (Cys-Thr).

Cross-links are proved in vitro, when coepressed in E.coli with the ProcM lanthionine synthetase. In terms of processing, the beta-methyllanthionine residues have a DL configuration (with 2S,3S,6R stereochemistry). Post-translationally, maturation of prochlorosin involves the enzymatic conversion of Thr, and Ser into dehydrated AA and the formation of thioether bonds with cysteines. This is followed by membrane translocation and cleavage of the modified precursor.

The protein resides in the secreted. Lanthionine-containing peptide (lantipeptide) with unknown function. Does not show antibiotic activity against Lactococcus lactis 117 and Bacillus subtilis 6633 bacteria. Organisms that produce this peptide live in oligotrophic environments at very dilute concentrations, suggesting this peptide is not secreted to influence other bacteria. The polypeptide is Lantipeptide prochlorosin 3.3 (Prochlorococcus marinus (strain MIT 9313)).